The following is a 468-amino-acid chain: Serine/threonine-protein phosphatase 2A 55 kDa regulatory subunit B beta isoform (468 aa).

7 WD repeats span residues 47-86 (SSAD…KNQP), 112-153 (EIEE…KRPE), 196-234 (AHTY…RSFN), 245-285 (ELTE…LCDK), 304-342 (EIIS…RPIE), 359-400 (ENDC…DVTL), and 435-468 (DFSK…DKVN).

It belongs to the phosphatase 2A regulatory subunit B family. In terms of assembly, PP2A consists of a common heterodimeric core enzyme, composed of a 36 kDa catalytic subunit (subunit C) and a 65 kDa constant regulatory subunit (PR65 or subunit A), that associates with a variety of regulatory subunits.

It localises to the cytoplasm. The protein resides in the cytoskeleton. The protein localises to the membrane. Its function is as follows. The B regulatory subunit might modulate substrate selectivity and catalytic activity, and might also direct the localization of the catalytic enzyme to a particular subcellular compartment. Negatively controls the initiation of oocyte maturation. This chain is Serine/threonine-protein phosphatase 2A 55 kDa regulatory subunit B beta isoform (ppp2r2b), found in Xenopus laevis (African clawed frog).